Reading from the N-terminus, the 1119-residue chain is Solute carrier family 38 member 10 (1119 aa).

10 helical membrane-spanning segments follow: residues 4–24 (AAAS…GVSV), 36–58 (IVLG…MFLV), 84–104 (LVET…YVVI), 120–140 (VGGT…VLPL), 153–173 (FSAM…LSSL), 229–249 (IFAS…FFGY), 272–292 (MLRV…ILPC), 323–343 (ALTL…PNVE), 345–365 (ILGL…PALI), and 378–398 (VVLW…LSVS). Disordered stretches follow at residues 438 to 691 (AEDG…EEAG) and 731 to 1071 (KEIH…DGVI). 5 stretches are compositionally biased toward basic and acidic residues: residues 439–454 (EDGR…REEL), 466–475 (PGREDGKEAP), 493–522 (EAHR…ENKP), 544–559 (DSER…EVGK), and 592–603 (AKEDLGPGDRGL). Ser-612 carries the post-translational modification Phosphoserine. The span at 652 to 667 (PPLPAEKPAPGPGLPP) shows a compositional bias: pro residues. Basic and acidic residues-rich tracts occupy residues 668–677 (EPREQRDVER), 731–752 (KEIH…EVHQ), and 763–773 (EAPEGKARETV). At Thr-772 the chain carries Phosphothreonine. Ser-802 is modified (phosphoserine). Basic and acidic residues-rich tracts occupy residues 832 to 841 (KLRDGQKDAA) and 863 to 876 (PARE…RLAE). The segment covering 880-889 (GQSQDVTGGS) has biased composition (polar residues). Phosphoserine is present on residues Ser-889, Ser-965, and Ser-997. 3 stretches are compositionally biased toward basic and acidic residues: residues 975–1005 (HRLD…RGGE), 1012–1022 (PRQRPEPELGL), and 1033–1042 (DNAKPNRDLK).

This sequence belongs to the amino acid/polyamine transporter 2 family.

The protein resides in the membrane. The enzyme catalyses L-glutamate(out) = L-glutamate(in). The catalysed reaction is L-glutamine(out) = L-glutamine(in). It carries out the reaction L-alanine(in) = L-alanine(out). It catalyses the reaction L-serine(in) = L-serine(out). The enzyme catalyses L-leucine(in) = L-leucine(out). Its function is as follows. Facilitates bidirectional transport of amino acids. May act as a glutamate sensor that regulates glutamate-glutamine cycle and mTOR signaling in the brain. The transport mechanism remains to be elucidated. The protein is Solute carrier family 38 member 10 of Homo sapiens (Human).